The following is a 238-amino-acid chain: Ribonuclease PH (238 aa).

Phosphate contacts are provided by residues Arg86 and 124–126; that span reads GTR.

Belongs to the RNase PH family. Homohexameric ring arranged as a trimer of dimers.

It catalyses the reaction tRNA(n+1) + phosphate = tRNA(n) + a ribonucleoside 5'-diphosphate. In terms of biological role, phosphorolytic 3'-5' exoribonuclease that plays an important role in tRNA 3'-end maturation. Removes nucleotide residues following the 3'-CCA terminus of tRNAs; can also add nucleotides to the ends of RNA molecules by using nucleoside diphosphates as substrates, but this may not be physiologically important. Probably plays a role in initiation of 16S rRNA degradation (leading to ribosome degradation) during starvation. This Photobacterium profundum (strain SS9) protein is Ribonuclease PH.